The chain runs to 109 residues: Putative RNase MJ1380 (109 aa).

Catalysis depends on residues R76 and H81. Residues 76 to 83 (RNILIHKY) carry the RX(4)HXY motif motif. Y83 carries the O-di-AMP-tyrosine modification.

The protein belongs to the HepT RNase toxin family. Homodimer, probably forms a complex with cognate antitoxin MJ1379. In terms of processing, modified by cognate antitoxin MJ1379; probably at least 2 successive AMPylation events occur on Tyr-83.

In terms of biological role, probable toxic component of a putative type VII toxin-antitoxin (TA) system, probably an RNase. Probably neutralized by cognate antitoxin MJ1379. Neutralization may be due to AMPylation by antitoxin MJ1379. This Methanocaldococcus jannaschii (strain ATCC 43067 / DSM 2661 / JAL-1 / JCM 10045 / NBRC 100440) (Methanococcus jannaschii) protein is Putative RNase MJ1380.